We begin with the raw amino-acid sequence, 157 residues long: Large ribosomal subunit protein uL15 (157 aa).

The segment at Met1–Arg64 is disordered. The span at Arg21–Ala31 shows a compositional bias: gly residues.

This sequence belongs to the universal ribosomal protein uL15 family. In terms of assembly, part of the 50S ribosomal subunit.

Binds to the 23S rRNA. The protein is Large ribosomal subunit protein uL15 of Magnetococcus marinus (strain ATCC BAA-1437 / JCM 17883 / MC-1).